A 69-amino-acid polypeptide reads, in one-letter code: Sec-independent protein translocase protein TatA (69 aa).

A helical membrane pass occupies residues 1 to 21 (MFPKLGMGELVVILLIVVILF). Residues 43–69 (SFSGEDEEKPSTPGATSSDEASKAKQA) are disordered.

It belongs to the TatA/E family. The Tat system comprises two distinct complexes: a TatABC complex, containing multiple copies of TatA, TatB and TatC subunits, and a separate TatA complex, containing only TatA subunits. Substrates initially bind to the TatABC complex, which probably triggers association of the separate TatA complex to form the active translocon.

The protein localises to the cell inner membrane. Its function is as follows. Part of the twin-arginine translocation (Tat) system that transports large folded proteins containing a characteristic twin-arginine motif in their signal peptide across membranes. TatA could form the protein-conducting channel of the Tat system. This chain is Sec-independent protein translocase protein TatA, found in Anaeromyxobacter sp. (strain Fw109-5).